A 97-amino-acid polypeptide reads, in one-letter code: Co-chaperonin GroES (97 aa).

This sequence belongs to the GroES chaperonin family. As to quaternary structure, heptamer of 7 subunits arranged in a ring. Interacts with the chaperonin GroEL.

It localises to the cytoplasm. In terms of biological role, together with the chaperonin GroEL, plays an essential role in assisting protein folding. The GroEL-GroES system forms a nano-cage that allows encapsulation of the non-native substrate proteins and provides a physical environment optimized to promote and accelerate protein folding. GroES binds to the apical surface of the GroEL ring, thereby capping the opening of the GroEL channel. The sequence is that of Co-chaperonin GroES from Symbiobacterium thermophilum (strain DSM 24528 / JCM 14929 / IAM 14863 / T).